We begin with the raw amino-acid sequence, 384 residues long: 8-amino-7-oxononanoate synthase (384 aa).

Arg-21 provides a ligand contact to substrate. 108-109 (GF) contributes to the pyridoxal 5'-phosphate binding site. A substrate-binding site is contributed by His-133. Residues Ser-179, His-207, and Thr-233 each contribute to the pyridoxal 5'-phosphate site. Lys-236 is modified (N6-(pyridoxal phosphate)lysine). Residue Thr-352 coordinates substrate.

The protein belongs to the class-II pyridoxal-phosphate-dependent aminotransferase family. BioF subfamily. In terms of assembly, homodimer. Requires pyridoxal 5'-phosphate as cofactor.

The enzyme catalyses 6-carboxyhexanoyl-[ACP] + L-alanine + H(+) = (8S)-8-amino-7-oxononanoate + holo-[ACP] + CO2. It functions in the pathway cofactor biosynthesis; biotin biosynthesis. In terms of biological role, catalyzes the decarboxylative condensation of pimeloyl-[acyl-carrier protein] and L-alanine to produce 8-amino-7-oxononanoate (AON), [acyl-carrier protein], and carbon dioxide. This is 8-amino-7-oxononanoate synthase from Shigella dysenteriae serotype 1 (strain Sd197).